The chain runs to 136 residues: Classical arabinogalactan protein 11 (136 aa).

Residues 1-20 (MARLFVVVALLALAVGTVFA) form the signal peptide. 3 stretches are compositionally biased toward low complexity: residues 24-56 (PSAA…ASSP), 68-81 (SAAS…APTV), and 89-107 (PEAD…PAAA). The tract at residues 24–115 (PSAAPTASPT…AAESPKSGAT (92 aa)) is disordered. Serine 112 carries the GPI-anchor amidated serine lipid modification. Residues 113–136 (GATTNVKLSIAGTVAAAGFFIFSL) constitute a propeptide, removed in mature form.

It belongs to the classical AGP family. Post-translationally, O-glycosylated on the hydroxyproline residues.

The protein resides in the cell membrane. Its function is as follows. Proteoglycan that seems to be implicated in diverse developmental roles such as differentiation, cell-cell recognition, embryogenesis and programmed cell death. This chain is Classical arabinogalactan protein 11 (AGP11), found in Arabidopsis thaliana (Mouse-ear cress).